The primary structure comprises 235 residues: Protein RESISTANCE TO PHYTOPHTHORA 1, chloroplastic (235 aa).

The transit peptide at Met-1–Ser-43 directs the protein to the chloroplast. Residues Val-53–Asp-66 show a composition bias toward basic and acidic residues. A disordered region spans residues Val-53–Val-92. A run of 4 helical transmembrane segments spans residues Phe-131–Phe-151, Ile-158–Arg-178, Leu-188–Ser-208, and Val-211–Leu-231.

It is found in the plastid. Its subcellular location is the chloroplast. The protein resides in the membrane. In terms of biological role, plays a positive role in the immune response to the oomycetes P.infestans, including induced oxidative burst and enhanced expression of defense-related genes. The sequence is that of Protein RESISTANCE TO PHYTOPHTHORA 1, chloroplastic from Solanum tuberosum (Potato).